Consider the following 338-residue polypeptide: 5-dehydro-2-deoxygluconokinase (338 aa).

The protein belongs to the carbohydrate kinase PfkB family.

It catalyses the reaction 5-dehydro-2-deoxy-D-gluconate + ATP = 6-phospho-5-dehydro-2-deoxy-D-gluconate + ADP + H(+). The protein operates within polyol metabolism; myo-inositol degradation into acetyl-CoA; acetyl-CoA from myo-inositol: step 5/7. Catalyzes the phosphorylation of 5-dehydro-2-deoxy-D-gluconate (2-deoxy-5-keto-D-gluconate or DKG) to 6-phospho-5-dehydro-2-deoxy-D-gluconate (DKGP). The sequence is that of 5-dehydro-2-deoxygluconokinase from Clostridium perfringens (strain ATCC 13124 / DSM 756 / JCM 1290 / NCIMB 6125 / NCTC 8237 / Type A).